We begin with the raw amino-acid sequence, 162 residues long: Ribosome maturation factor RimM (162 aa).

The PRC barrel domain maps to 86 to 160 (EGRYYYFALI…GIHVDPIPGL (75 aa)).

The protein belongs to the RimM family. As to quaternary structure, binds ribosomal protein uS19.

It localises to the cytoplasm. An accessory protein needed during the final step in the assembly of 30S ribosomal subunit, possibly for assembly of the head region. Essential for efficient processing of 16S rRNA. May be needed both before and after RbfA during the maturation of 16S rRNA. It has affinity for free ribosomal 30S subunits but not for 70S ribosomes. This is Ribosome maturation factor RimM from Thermus thermophilus (strain ATCC BAA-163 / DSM 7039 / HB27).